The sequence spans 127 residues: Large ribosomal subunit protein bL17 (127 aa).

The protein belongs to the bacterial ribosomal protein bL17 family. In terms of assembly, part of the 50S ribosomal subunit. Contacts protein L32.

The chain is Large ribosomal subunit protein bL17 from Xanthomonas campestris pv. campestris (strain 8004).